Here is a 273-residue protein sequence, read N- to C-terminus: 3-methyl-2-oxobutanoate hydroxymethyltransferase 2 (273 aa).

Mg(2+) contacts are provided by Asp-50 and Asp-89. 3-methyl-2-oxobutanoate-binding positions include 50–51 (DS), Asp-89, and Lys-119. Residue Glu-121 coordinates Mg(2+). Residue Glu-188 is the Proton acceptor of the active site.

This sequence belongs to the PanB family. As to quaternary structure, homodecamer; pentamer of dimers. Requires Mg(2+) as cofactor.

It localises to the cytoplasm. The catalysed reaction is 3-methyl-2-oxobutanoate + (6R)-5,10-methylene-5,6,7,8-tetrahydrofolate + H2O = 2-dehydropantoate + (6S)-5,6,7,8-tetrahydrofolate. It participates in cofactor biosynthesis; (R)-pantothenate biosynthesis; (R)-pantoate from 3-methyl-2-oxobutanoate: step 1/2. Catalyzes the reversible reaction in which hydroxymethyl group from 5,10-methylenetetrahydrofolate is transferred onto alpha-ketoisovalerate to form ketopantoate. The protein is 3-methyl-2-oxobutanoate hydroxymethyltransferase 2 of Zymomonas mobilis subsp. mobilis (strain ATCC 31821 / ZM4 / CP4).